The sequence spans 629 residues: Chaperone protein HtpG (629 aa).

Positions 1–336 (MSSTENNGTA…TEDLSLNVSR (336 aa)) are a; substrate-binding. Residues 337–549 (EMVQSSPVMA…KDAIDSQLER (213 aa)) form a b region. Residues 550–629 (MMKMMNTPMP…ELIEAATLTR (80 aa)) form a c region.

Belongs to the heat shock protein 90 family. As to quaternary structure, homodimer.

It localises to the cytoplasm. Functionally, molecular chaperone. Has ATPase activity. The chain is Chaperone protein HtpG from Chlorobium chlorochromatii (strain CaD3).